The chain runs to 469 residues: Cyclin-dependent kinase 14 (469 aa).

Phosphoserine occurs at positions 24, 78, and 95. The segment at 103-133 is disordered; sequence FKTSSTGKESPKVRRHSSPSSPTSPKFGKAD. A Phosphoserine modification is found at Ser134. Residues 135–419 form the Protein kinase domain; it reads YEKLEKLGEG…AQAALSHEYF (285 aa). ATP contacts are provided by residues 141 to 149 and Lys164; that span reads LGEGSYATV. Asp256 serves as the catalytic Proton acceptor. Positions 449 to 469 are disordered; that stretch reads ESMRAFGKNNSYGKSLSNSKH. The span at 456 to 469 shows a compositional bias: polar residues; the sequence is KNNSYGKSLSNSKH.

The protein belongs to the protein kinase superfamily. CMGC Ser/Thr protein kinase family. CDC2/CDKX subfamily. In terms of assembly, found in a complex with LRP6, CCNY and CAPRIN2 during G2/M stage; CAPRIN2 functions as a scaffold for the complex by binding to CCNY via its N terminus and to CDK14 via its C terminus. Interacts with CCNY; CCNY mediates its recruitment to the plasma membrane and promotes phosphorylation of LRP6. Interacts with CCDN3 and CDKN1A. Interacts with SEPT8. Interacts with 14-3-3 proteina YWHAB, YWHAE, YWHAH and YWHAQ. As to expression, highly expressed in brain, pancreas, kidney, heart, testis and ovary. Also detected at lower levels in other tissues except in spleen and thymus where expression is barely detected.

The protein resides in the cell membrane. It localises to the cytoplasm. It is found in the nucleus. It carries out the reaction L-seryl-[protein] + ATP = O-phospho-L-seryl-[protein] + ADP + H(+). It catalyses the reaction L-threonyl-[protein] + ATP = O-phospho-L-threonyl-[protein] + ADP + H(+). With respect to regulation, serine/threonine-protein kinase activity is promoted by associated cyclins CCDN3 and CCNY and repressed by CDKN1A. Serine/threonine-protein kinase involved in the control of the eukaryotic cell cycle, whose activity is controlled by an associated cyclin. Acts as a cell-cycle regulator of Wnt signaling pathway during G2/M phase by mediating the phosphorylation of LRP6 at 'Ser-1490', leading to the activation of the Wnt signaling pathway. Acts as a regulator of cell cycle progression and cell proliferation via its interaction with CCDN3. Phosphorylates RB1 in vitro, however the relevance of such result remains to be confirmed in vivo. May also play a role in meiosis, neuron differentiation and may indirectly act as a negative regulator of insulin-responsive glucose transport. The polypeptide is Cyclin-dependent kinase 14 (CDK14) (Homo sapiens (Human)).